A 427-amino-acid polypeptide reads, in one-letter code: Glutamate-1-semialdehyde 2,1-aminomutase (427 aa).

N6-(pyridoxal phosphate)lysine is present on Lys265.

Belongs to the class-III pyridoxal-phosphate-dependent aminotransferase family. HemL subfamily. Homodimer. It depends on pyridoxal 5'-phosphate as a cofactor.

Its subcellular location is the cytoplasm. It catalyses the reaction (S)-4-amino-5-oxopentanoate = 5-aminolevulinate. It functions in the pathway porphyrin-containing compound metabolism; protoporphyrin-IX biosynthesis; 5-aminolevulinate from L-glutamyl-tRNA(Glu): step 2/2. This chain is Glutamate-1-semialdehyde 2,1-aminomutase, found in Pseudomonas syringae pv. syringae (strain B728a).